A 302-amino-acid chain; its full sequence is Protein TILLER ANGLE CONTROL 1 (302 aa).

An IGT motif motif is present at residues 57–63 (GILTIGT). Disordered regions lie at residues 82 to 115 (ESEEDDQESHGFSHSGNDDDDDDDEHYDHSVEDE) and 159 to 180 (EGSSEISTKPDQSANDQSKNKK). Acidic residues predominate over residues 99 to 115 (DDDDDDDEHYDHSVEDE). Positions 162 to 175 (SEISTKPDQSANDQ) are enriched in polar residues.

It belongs to the TAC family. In terms of tissue distribution, highly expressed in flower buds. Expressed in branch attachment sites, vegetative buds and young fruits.

Its function is as follows. Involved in the regulation of axillary shoot growth angle. Promotes horizontal shoot growth. This chain is Protein TILLER ANGLE CONTROL 1, found in Prunus persica (Peach).